A 429-amino-acid chain; its full sequence is Probable electron transfer flavoprotein-quinone oxidoreductase YdiS (429 aa).

An FAD-binding site is contributed by 8–22 (AIVVGAGVAGSVAAL).

It belongs to the ETF-QO/FixC family. FAD is required as a cofactor.

Its function is as follows. Probably accepts electrons from YdiQ/YdiR and reduces a quinone. In Escherichia coli (strain K12), this protein is Probable electron transfer flavoprotein-quinone oxidoreductase YdiS (ydiS).